An 869-amino-acid chain; its full sequence is AP-3 complex subunit delta (869 aa).

N-acetylserine is present on Ser2. HEAT repeat units follow at residues Asn33–Val70, Ser107–Asp142, Leu143–Asp179, Ala180–Gln216, Cys218–Arg254, Ala292–Trp329, and Ala330–Val366. Residues Ile738 to Leu869 form a disordered region. Positions Ile769–Ala780 are enriched in polar residues. The segment covering Gln815–Glu830 has biased composition (basic and acidic residues). Over residues Lys831–Arg850 the composition is skewed to basic residues.

Belongs to the adaptor complexes large subunit family. Adaptor protein complex 3 (AP-3) is a heterotetramer composed of two large adaptins (delta-type subunit and beta-type subunit), a medium adaptin (mu-type subunit) and a small adaptin (sigma-type subunit). Binds to EPSIN2.

It localises to the cytoplasm. The protein resides in the golgi apparatus membrane. Part of the AP-3 complex, an adaptor-related complex which seems to be clathrin-associated. The complex is associated with the Golgi region as well as more peripheral structures. It facilitates the budding of vesicles from the Golgi membrane and may be directly involved in trafficking to the vacuole. It also function in maintaining the identity of lytic vacuoles and in regulating the transition between storage and lytic vacuoles. The protein is AP-3 complex subunit delta (DELTA-ADR) of Arabidopsis thaliana (Mouse-ear cress).